A 286-amino-acid chain; its full sequence is Putative L-ribulose-5-phosphate 3-epimerase SgbU (286 aa).

Belongs to the L-ribulose-5-phosphate 3-epimerase family.

It carries out the reaction L-ribulose 5-phosphate = L-xylulose 5-phosphate. In terms of biological role, catalyzes the isomerization of L-xylulose-5-phosphate to L-ribulose-5-phosphate (Potential). May be involved in the utilization of 2,3-diketo-L-gulonate. This is Putative L-ribulose-5-phosphate 3-epimerase SgbU (sgbU) from Escherichia coli (strain K12).